A 300-amino-acid polypeptide reads, in one-letter code: GTPase Era (300 aa).

Residues 4 to 173 enclose the Era-type G domain; it reads KYGIVAIVGK…INTIKNYLHK (170 aa). Residues 12–19 form a G1 region; the sequence is GKPNVGKS. 12–19 contributes to the GTP binding site; that stretch reads GKPNVGKS. The G2 stretch occupies residues 38–42; it reads QTTRN. Residues 59-62 are G3; the sequence is DTPG. Residues 59–63 and 122–125 contribute to the GTP site; these read DTPGF and SKAE. Positions 122 to 125 are G4; that stretch reads SKAE. A G5 region spans residues 152-154; that stretch reads ISA. Residues 204–282 enclose the KH type-2 domain; the sequence is LNHEVPHGVG…SLTIFVKVEN (79 aa).

The protein belongs to the TRAFAC class TrmE-Era-EngA-EngB-Septin-like GTPase superfamily. Era GTPase family. In terms of assembly, monomer.

It is found in the cytoplasm. Its subcellular location is the cell membrane. An essential GTPase that binds both GDP and GTP, with rapid nucleotide exchange. Plays a role in 16S rRNA processing and 30S ribosomal subunit biogenesis and possibly also in cell cycle regulation and energy metabolism. In Ureaplasma parvum serovar 3 (strain ATCC 27815 / 27 / NCTC 11736), this protein is GTPase Era.